The following is a 270-amino-acid chain: SAMP-activating enzyme E1 (270 aa).

Residues G42, D63, 70 to 74, and K87 each bind ATP; that span reads SNLQR. K113 is covalently cross-linked (Glycyl lysine isopeptide (Lys-Gly) (interchain with G-Cter in SAMP2)). 131–132 serves as a coordination point for ATP; sequence DN. The Zn(2+) site is built by C171 and C174. The active-site Glycyl thioester intermediate is the C188. C245 and C248 together coordinate Zn(2+).

Belongs to the HesA/MoeB/ThiF family. As to quaternary structure, interacts with NcsA. Zn(2+) serves as cofactor. In terms of processing, sampylated at Lys-113 with the archaeal ubiquitin-like protein SAMP2. Also sampylated with SAMP1.

It catalyses the reaction [small archaeal modifier protein]-C-terminal Gly-Gly + ATP + H(+) = [small archaeal modifier protein]-C-terminal Gly-Gly-AMP + diphosphate. In terms of biological role, likely activates multiple ubiquitin-like SAMPs for protein conjugation as well as for sulfur transfer, via ATP-dependent adenylation at their C-terminus. In fact, it is required for the formation of all three SAMP1-, SAMP2- and SAMP3-protein conjugates, and for molybdenum cofactor (MoCo) biosynthesis and thiolation of tRNAs. This Haloferax volcanii (strain ATCC 29605 / DSM 3757 / JCM 8879 / NBRC 14742 / NCIMB 2012 / VKM B-1768 / DS2) (Halobacterium volcanii) protein is SAMP-activating enzyme E1 (ubaA).